We begin with the raw amino-acid sequence, 329 residues long: Tryptophan--tRNA ligase (329 aa).

ATP-binding positions include 9–11 and 17–18; these read QPS and GN. A 'HIGH' region motif is present at residues 10-18; it reads PSGIPTIGN. Asp-133 is a binding site for L-tryptophan. ATP-binding positions include 145–147, Val-184, and 193–197; these read GDD and KMSKS. A 'KMSKS' region motif is present at residues 193-197; sequence KMSKS.

Belongs to the class-I aminoacyl-tRNA synthetase family. Homodimer.

It is found in the cytoplasm. The catalysed reaction is tRNA(Trp) + L-tryptophan + ATP = L-tryptophyl-tRNA(Trp) + AMP + diphosphate + H(+). Functionally, catalyzes the attachment of tryptophan to tRNA(Trp). This Staphylococcus epidermidis (strain ATCC 35984 / DSM 28319 / BCRC 17069 / CCUG 31568 / BM 3577 / RP62A) protein is Tryptophan--tRNA ligase.